Here is a 647-residue protein sequence, read N- to C-terminus: NADP-dependent malic enzyme, chloroplastic (647 aa).

The transit peptide at 1 to 61 (MMSLNSSSVV…VDGAVKDVNA (61 aa)) directs the protein to the chloroplast. The active-site Proton donor is the Y195. R248 contacts NAD(+). The Proton acceptor role is filled by K266. A divalent metal cation-binding residues include E338, D339, and D362. D362 serves as a coordination point for NAD(+). Residue 391–407 (LFLGAGEAGTGIAELIA) coordinates NADP(+). An NAD(+)-binding site is contributed by N503.

Belongs to the malic enzymes family. Homotetramer. Requires Mg(2+) as cofactor. The cofactor is Mn(2+).

It localises to the plastid. Its subcellular location is the chloroplast. It carries out the reaction (S)-malate + NADP(+) = pyruvate + CO2 + NADPH. The catalysed reaction is oxaloacetate + H(+) = pyruvate + CO2. The protein operates within photosynthesis; C3 acid pathway. In terms of biological role, the chloroplastic ME isoform decarboxylates malate shuttled from neighboring mesophyll cells. The CO(2) released is then refixed by ribulose-bisphosphate carboxylase. This pathway eliminates the photorespiratory loss of CO(2) that occurs in most plants. The sequence is that of NADP-dependent malic enzyme, chloroplastic (MODA) from Flaveria pringlei.